The chain runs to 1107 residues: OTU domain-containing protein 4 (1107 aa).

Met1 is subject to N-acetylmethionine. Residues 34 to 155 (LYRKLVAKDG…GNHYDIVYPI (122 aa)) enclose the OTU domain. A cys-loop region spans residues 39–45 (VAKDGSC). Asp42 is a catalytic residue. Catalysis depends on Cys45, which acts as the Nucleophile. Positions 94–104 (LENPQEWVGQV) are variable-loop. Position 120 is a phosphotyrosine (Tyr120). 2 positions are modified to phosphoserine: Ser126 and Ser128. Thr131 is subject to Phosphothreonine. Residues 143 to 148 (FSNGNH) form a his-loop region. His148 is an active-site residue. Phosphoserine is present on residues Ser166, Ser199, Ser202, and Ser204. The segment covering 195-206 (EESNSEISDSED) has biased composition (acidic residues). Disordered stretches follow at residues 195–239 (EESN…SADL) and 322–431 (KHTP…DFDH). The span at 226-236 (GSENPKNNGNS) shows a compositional bias: polar residues. Phosphoserine is present on Ser340. Positions 392 to 403 (SSHSTGSQSQKS) are enriched in low complexity. Positions 419–431 (RKPDRERAEDFDH) are enriched in basic and acidic residues. Residue Tyr438 is modified to Phosphotyrosine. Ser442 is subject to Phosphoserine. Position 459 is a phosphotyrosine (Tyr459). A disordered region spans residues 470–568 (PALSSSSVSQ…KPAEHIPLSN (99 aa)). The span at 473 to 486 (SSSSVSQSPSQNSN) shows a compositional bias: low complexity. Over residues 495–528 (HARDRKGSMRRADAEERKDKDSLRGHTHVDKKPE) the composition is skewed to basic and acidic residues. Phosphoserine occurs at positions 544 and 895. Residues 918–1107 (LSAASVSSKH…MGDGHRGQHT (190 aa)) form a disordered region. The span at 963-994 (NREREPGSAEPEPKRTIQSLKEKPEKVKDPKT) shows a compositional bias: basic and acidic residues. A phosphoserine mark is found at Ser1000, Ser1005, Ser1016, and Ser1017. Residues 1032-1041 (SKQFYNQTYG) show a composition bias toward polar residues. Ser1042 bears the Phosphoserine mark. 2 stretches are compositionally biased toward basic and acidic residues: residues 1060–1079 (VRGE…EGYQ) and 1089–1107 (YRGD…GQHT).

As to quaternary structure, interacts with MYD88; the interaction is direct. Interacts with ALKBH3; the interaction is direct. Interacts with USP7; the interaction is direct. Interacts with USP9X; the interaction is direct. In terms of processing, phosphorylation at Ser-202 and Ser-204 activates 'Lys-63'-specific deubiquitinase activity. Induced upon stimulation with IL1B.

The protein resides in the cytoplasm. It is found in the nucleus. The enzyme catalyses Thiol-dependent hydrolysis of ester, thioester, amide, peptide and isopeptide bonds formed by the C-terminal Gly of ubiquitin (a 76-residue protein attached to proteins as an intracellular targeting signal).. With respect to regulation, phosphorylation on Ser-202 and Ser-204 induces 'Lys-63'-specific deubiquitinase activity. Its function is as follows. Deubiquitinase which hydrolyzes the isopeptide bond between the ubiquitin C-terminus and the lysine epsilon-amino group of the target protein. May negatively regulate inflammatory and pathogen recognition signaling in innate immune response. Upon phosphorylation at Ser-202 and Ser-204 residues, via IL-1 receptor and Toll-like receptor signaling pathway, specifically deubiquitinates 'Lys-63'-polyubiquitinated MYD88 adapter protein triggering down-regulation of NF-kappa-B-dependent transcription of inflammatory mediators. Independently of the catalytic activity, acts as a scaffold for alternative deubiquitinases to assemble specific deubiquitinase-substrate complexes. Associates with USP7 and USP9X deubiquitinases to stabilize alkylation repair enzyme ALKBH3, thereby promoting the repair of alkylated DNA lesions. The chain is OTU domain-containing protein 4 from Mus musculus (Mouse).